Here is a 515-residue protein sequence, read N- to C-terminus: WUSCHEL-related homeobox 12 (515 aa).

Polar residues-rich tracts occupy residues 23 to 32 (QQQPDMNGNG) and 44 to 57 (TAATTGNGKPSLLS). Disordered stretches follow at residues 23–76 (QQQP…WNPR), 130–156 (NKLRAAGHHHHHGRAAALPRASAPPST), and 176–195 (LLAATSSSSSSSDRSSGSSK). Positions 62–71 (EGTRNPEPKP) are enriched in basic and acidic residues. Residues 68–132 (EPKPRWNPRP…NRKSRTKNKL (65 aa)) constitute a DNA-binding region (homeobox; WUS-type). Residues 130-143 (NKLRAAGHHHHHGR) are compositionally biased toward basic residues. Composition is skewed to low complexity over residues 144–156 (AAALPRASAPPST) and 177–195 (LAATSSSSSSSDRSSGSSK).

Belongs to the WUS homeobox family.

The protein resides in the nucleus. Transcription factor which may be involved in developmental processes. This Oryza sativa subsp. japonica (Rice) protein is WUSCHEL-related homeobox 12 (WOX12).